A 59-amino-acid chain; its full sequence is Putative HTH-type transcriptional regulator YneL (59 aa).

Positions 1–59 (MSPLRYQKWLRLNEVRRQMLNEHYDVTTAAYAVGYESYPISVGNIRGCLESHPREILPG) constitute an HTH araC/xylS-type domain. A DNA-binding region (H-T-H motif) is located at residues 26–49 (VTTAAYAVGYESYPISVGNIRGCL).

In Escherichia coli (strain K12), this protein is Putative HTH-type transcriptional regulator YneL (yneL).